The following is a 524-amino-acid chain: MKVARVSEIKLLDREAAEKYGVKEEILMENAGASVARLAVSLIGLPMSAAVVCGPGNNGGDGLVAARHLSSMGADVKVFLVAAPDKLAGIVKENYERVVKAGIAVEVVDEERAEGLSEELSLFDVVVDALFGTGLSRPLEGVYRKVVEAINGSGSLVISVDIPSGVHGDTGQVLGVAVRADYTVTFGLPKLGNLMYPGAELGGELYVHHISYPRALLEDSRLKVETNDPVPLPPRRPDTHKGDYGKALFVAGSRRYMGAPLLCSKSFLKAGGGYSRLATIKSIVPFLGVRAPEVVYEALEETASGTVAYGNLERILELSKSSDIVAVGPGLGLEEETLRLVCDLARSVEKPLIVDGDGLTAVARCGEYISERRAPTVLTPHAGEMSRLTGKSVEEVRASRVDAALELAGKLKAYVVLKGAHTVIATPDGRAYINLSGNPGMATAGSGDVLVGAIAALYGLGLGFEEAVRMGVFVHGLAGDIAAEERGQDGLTSVTLMNYLPKALRALREDFESVLERYTIKVLP.

Positions M1 to D219 are NAD(P)H-hydrate epimerase. Residues I9–E218 enclose the YjeF N-terminal domain. The segment at N57–D61 is NADPHX 1; for epimerase activity. K(+) contacts are provided by N58 and D128. The tract at residues G132–P138 is NADPHX 1; for epimerase activity. The (6S)-NADPHX site is built by Y143 and D161. Position 164 (S164) interacts with K(+). The region spanning V224 to L507 is the YjeF C-terminal domain. The ADP-dependent (S)-NAD(P)H-hydrate dehydratase stretch occupies residues V224–P524. G330 serves as a coordination point for (6S)-NADPHX. The tract at residues H381–R387 is NADPHX 2; for dehydratase activity. ADP contacts are provided by residues K418–T422 and N438–G447. D448 is a (6S)-NADPHX binding site.

It in the N-terminal section; belongs to the NnrE/AIBP family. This sequence in the C-terminal section; belongs to the NnrD/CARKD family. It depends on K(+) as a cofactor.

It catalyses the reaction (6S)-NADHX + ADP = AMP + phosphate + NADH + H(+). It carries out the reaction (6S)-NADPHX + ADP = AMP + phosphate + NADPH + H(+). The catalysed reaction is (6R)-NADHX = (6S)-NADHX. The enzyme catalyses (6R)-NADPHX = (6S)-NADPHX. Its function is as follows. Bifunctional enzyme that catalyzes the epimerization of the S- and R-forms of NAD(P)HX and the dehydration of the S-form of NAD(P)HX at the expense of ADP, which is converted to AMP. This allows the repair of both epimers of NAD(P)HX, a damaged form of NAD(P)H that is a result of enzymatic or heat-dependent hydration. The polypeptide is Bifunctional NAD(P)H-hydrate repair enzyme Nnr (nnr) (Thermofilum pendens (strain DSM 2475 / Hrk 5)).